The primary structure comprises 421 residues: Proton/sodium-glutamate symport protein (421 aa).

The Cytoplasmic portion of the chain corresponds to 1–3 (MRK). A helical transmembrane segment spans residues 4-24 (IGLAWQIFIGLILGIIVGAIF). Residues 25–43 (YGNPKVATYLQPIGDIFLR) are Extracellular-facing. A helical membrane pass occupies residues 44-64 (LIKMIVIPIVISSLVVGVASV). The Cytoplasmic portion of the chain corresponds to 65–77 (GDLKKLGKLGGKT). A helical transmembrane segment spans residues 78–98 (IIYFEIITTIAIVVGLLAANI). The Extracellular segment spans residues 99–148 (FQPGTGVNMKSLEKTDIQSYVDTTNEVQHHSMVETFVNIVPKNIFESLTK). The chain crosses the membrane as a helical span at residues 149–169 (GDMLPIIFFSVMFGLGVAAIG). Over 170–198 (EKGKPVLQFFQGTAEAMFYVTNQIMKFAP) the chain is Cytoplasmic. Residues 199-219 (FGVFALIGVTVSKFGVESLIP) form a helical membrane-spanning segment. Residues 220 to 222 (LSK) lie on the Extracellular side of the membrane. A helical transmembrane segment spans residues 223-243 (LVIVVYATMVFFIFVVLGGVA). A topological domain (cytoplasmic) is located at residue Lys-244. Residues 245–265 (LFGINIFHIIKILKDELILAY) form a helical membrane-spanning segment. The Extracellular segment spans residues 266-306 (STASSETVLPKIMEKMENFGCPKAITSFVIPTGYSFNLDGS). A helical membrane pass occupies residues 307 to 327 (TLYQALAAIFIAQLYGIDMPI). The Cytoplasmic portion of the chain corresponds to 328–330 (SQQ). The next 2 helical transmembrane spans lie at 331 to 351 (ISLLLVLMVTSKGIAGVPGVS) and 352 to 372 (FVVLLATLGTVGIPIEGLAFI). The Cytoplasmic segment spans residues 373–421 (AGIDRILDMARTAVNVIGNSLAAIIMSKWEGQYNEEKGKQYIAQLQQSA).

It belongs to the dicarboxylate/amino acid:cation symporter (DAACS) (TC 2.A.23) family. In terms of assembly, homotrimer.

It is found in the cell membrane. Its function is as follows. This carrier protein is part of the Na(+)-dependent, binding-protein-independent glutamate-aspartate transport system. In Geobacillus stearothermophilus (Bacillus stearothermophilus), this protein is Proton/sodium-glutamate symport protein (gltT).